The sequence spans 969 residues: MADRLIVKGAREHNLRSVDLDLPRDSLIVFTGLSGSGKSSLAFDTIFAEGQRRYVESLSAYARQFLGQMDKPDVDFIEGLSPAVSIDQKSTNRNPRSTVGTITEVYDYLRLLYARAGTPHCPICGEQISRQTPQQIVDQVLVLPEGTRFLVLAPVVRTRKGEFADLFDKLNAQGYSRVRVDDVVYPLSDPPKLKKQEKHDIEVVVDRLTVKIAAKQRLTDSVETALNLADGIVVLEFPDDHDERGHPREQCFSEKLACPNGHPLAVDDLEPRSFSFNSPYGACPECVGLGIRKEIDSDLVVPDPDRTLAEGAVAPWSAGRTAEYFTRMMAGLGEKLGFDVDTPWRKLPAKARKAILEGSDHQVHVQYHNRYGRPRSYYVDFEGVLTFLQRKMEQTESEQMKERYEGFMRNIPCPVCQGTRLKPEILAVTLAAGERGAKSIAEVCELSIADCSAFLNALILGVREQAIAGQVLKEIQSRLGFLLDVGLEYLSLSRAAATLSGGEAQRIRLATQIGSGLVGVLYVLDEPSIGLHQRDNRRLIETLTRLRALGNTLIVVEHDEDTIAHADWVVDIGPGAGEHGGQIVHNGTYRELLANKDSITGAYLSGRESIATPTRRRSVDRKRELTVVGAREHNLRGIDVSFPLGVLTSVTGVSGSGKSTLVNDILAAVLANRLNGARQVPGRHTRVTGLEHLDKLVRVDQSPIGRTPRSNPATYTGVFDKIRILFAATTEAKVRGYQPGRFSFNVKGGRCEACTGDGTIKIEMNFLPDVYVPCEVCQGARYNRETLEVHYKGKAISEVLDMSIEEAAEFFEPIIGINRYLRTLVDVGLGYVRLGQPAPTLSGGEAQRVKLASELQKRSTGRTIYILDEPTTGLHFDDIRKLLNVINGLVDKDNTVIVIEHNLDVIKTSDWIVDMGPEGGAQGGTVVAEGTPEDVAAVPESYTGKFLAEVVGAGCAPARTPRRRRTVTA.

32 to 39 serves as a coordination point for ATP; sequence GLSGSGKS. The segment at 258–286 adopts a C4-type zinc-finger fold; it reads CPNGHPLAVDDLEPRSFSFNSPYGACPEC. 2 ABC transporter domains span residues 316 to 599 and 619 to 948; these read WSAG…KDSI and VDRK…KFLA. 652 to 659 is a binding site for ATP; it reads GVSGSGKS. Residues 751–777 form a C4-type zinc finger; that stretch reads CEACTGDGTIKIEMNFLPDVYVPCEVC.

It belongs to the ABC transporter superfamily. UvrA family. Forms a heterotetramer with UvrB during the search for lesions.

It is found in the cytoplasm. The UvrABC repair system catalyzes the recognition and processing of DNA lesions. UvrA is an ATPase and a DNA-binding protein. A damage recognition complex composed of 2 UvrA and 2 UvrB subunits scans DNA for abnormalities. When the presence of a lesion has been verified by UvrB, the UvrA molecules dissociate. In Mycobacterium leprae (strain TN), this protein is UvrABC system protein A.